Consider the following 393-residue polypeptide: MTNSNRIKLTWISFLSYALTGALVIVTGMVMGNIADYFHLPVSNMSNTFTFLNAGILISIFLNAWLMEIVPLKTQLRFGFILMILAVAGLMLSHSLALFSAAMFVLGLVSGITMSIGTFLITQLYEGRQRGSRLLFTDSFFSMAGMVFPMVAAFLLARSIEWYWVYACIGLVYLAIFILTFGCEFPALGKHAQHSQAPAAKEKWGIGVLFLAVAALCYILGQLGFISWVPEYAKGLGMSLNDAGALVSDFWMSYMFGMWAFSFILRFFDLQRILTVLAGMATVLMYLFITGTQAHMPWFILTLGFFSSAIYTSIITLGSQQTKVASPKLVNFILTCGTIGTMLTFVVTGPIVAYSGPQAALLTANGLYAVVFVMCFALGFVSRHRQHSASAAH.

A run of 12 helical transmembrane segments spans residues 11–31 (WISF…GMVM), 51–71 (FLNA…EIVP), 78–98 (FGFI…SLAL), 101–121 (AAMF…TFLI), 134–154 (LLFT…VAAF), 162–182 (WYWV…LTFG), 206–226 (IGVL…LGFI), 245–265 (ALVS…SFIL), 273–293 (ILTV…TGTQ), 298–318 (WFIL…ITLG), 332–352 (FILT…GPIV), and 361–381 (LLTA…LGFV).

The protein belongs to the major facilitator superfamily. TsgA family.

Its subcellular location is the cell inner membrane. The chain is Protein TsgA from Salmonella arizonae (strain ATCC BAA-731 / CDC346-86 / RSK2980).